The following is a 432-amino-acid chain: Glutamyl-tRNA reductase (432 aa).

Residues 55-58, S114, 119-121, and Q125 each bind substrate; these read TCNR and ETQ. C56 functions as the Nucleophile in the catalytic mechanism. 194-199 serves as a coordination point for NADP(+); it reads GAGEMI.

This sequence belongs to the glutamyl-tRNA reductase family. In terms of assembly, homodimer.

It carries out the reaction (S)-4-amino-5-oxopentanoate + tRNA(Glu) + NADP(+) = L-glutamyl-tRNA(Glu) + NADPH + H(+). It functions in the pathway porphyrin-containing compound metabolism; protoporphyrin-IX biosynthesis; 5-aminolevulinate from L-glutamyl-tRNA(Glu): step 1/2. In terms of biological role, catalyzes the NADPH-dependent reduction of glutamyl-tRNA(Glu) to glutamate 1-semialdehyde (GSA). The polypeptide is Glutamyl-tRNA reductase (Burkholderia multivorans (strain ATCC 17616 / 249)).